A 393-amino-acid chain; its full sequence is Elongation factor Tu (393 aa).

In terms of domain architecture, tr-type G spans 10–203; the sequence is KPHVNIGTIG…AVDAFIPDPV (194 aa). The segment at 19-26 is G1; that stretch reads GHVDHGKT. Residue 19–26 coordinates GTP; that stretch reads GHVDHGKT. Mg(2+) is bound at residue threonine 26. The interval 60 to 64 is G2; sequence GITIS. Residues 81 to 84 are G3; it reads DCPG. GTP is bound by residues 81 to 85 and 136 to 139; these read DCPGH and NKVD. The interval 136–139 is G4; the sequence is NKVD. Positions 173 to 175 are G5; that stretch reads SAL.

Belongs to the TRAFAC class translation factor GTPase superfamily. Classic translation factor GTPase family. EF-Tu/EF-1A subfamily. Monomer.

Its subcellular location is the cytoplasm. The catalysed reaction is GTP + H2O = GDP + phosphate + H(+). Functionally, GTP hydrolase that promotes the GTP-dependent binding of aminoacyl-tRNA to the A-site of ribosomes during protein biosynthesis. The sequence is that of Elongation factor Tu from Chlorobium chlorochromatii (strain CaD3).